The following is a 280-amino-acid chain: Protease HtpX (280 aa).

The next 2 membrane-spanning stretches (helical) occupy residues 7–26 and 30–49; these read TFIL…GLLG and GMLV…YWYS. Residue histidine 129 participates in Zn(2+) binding. Glutamate 130 is an active-site residue. Residue histidine 133 coordinates Zn(2+). A run of 2 helical transmembrane segments spans residues 146-166 and 178-198; these read ATIA…SMFG and VVGM…QMAI. Glutamate 203 lines the Zn(2+) pocket.

This sequence belongs to the peptidase M48B family. Requires Zn(2+) as cofactor.

It localises to the cell inner membrane. The chain is Protease HtpX from Legionella pneumophila (strain Lens).